The chain runs to 523 residues: 2-isopropylmalate synthase (523 aa).

The region spanning 5-267 (VVIFDTTLRD…QTRINHNEIW (263 aa)) is the Pyruvate carboxyltransferase domain. Residues Asp14, His202, His204, and Asn238 each contribute to the Mn(2+) site. Residues 392–523 (RMDYFSVQSG…QNKENNKETV (132 aa)) are regulatory domain.

The protein belongs to the alpha-IPM synthase/homocitrate synthase family. LeuA type 1 subfamily. In terms of assembly, homodimer. It depends on Mn(2+) as a cofactor.

It is found in the cytoplasm. It carries out the reaction 3-methyl-2-oxobutanoate + acetyl-CoA + H2O = (2S)-2-isopropylmalate + CoA + H(+). It functions in the pathway amino-acid biosynthesis; L-leucine biosynthesis; L-leucine from 3-methyl-2-oxobutanoate: step 1/4. In terms of biological role, catalyzes the condensation of the acetyl group of acetyl-CoA with 3-methyl-2-oxobutanoate (2-ketoisovalerate) to form 3-carboxy-3-hydroxy-4-methylpentanoate (2-isopropylmalate). The protein is 2-isopropylmalate synthase of Enterobacter sp. (strain 638).